Here is a 70-residue protein sequence, read N- to C-terminus: NAD(P)H-quinone oxidoreductase subunit O (70 aa).

Belongs to the complex I NdhO subunit family. NDH-1 can be composed of about 15 different subunits; different subcomplexes with different compositions have been identified which probably have different functions.

The protein resides in the cellular thylakoid membrane. The catalysed reaction is a plastoquinone + NADH + (n+1) H(+)(in) = a plastoquinol + NAD(+) + n H(+)(out). It catalyses the reaction a plastoquinone + NADPH + (n+1) H(+)(in) = a plastoquinol + NADP(+) + n H(+)(out). Functionally, NDH-1 shuttles electrons from an unknown electron donor, via FMN and iron-sulfur (Fe-S) centers, to quinones in the respiratory and/or the photosynthetic chain. The immediate electron acceptor for the enzyme in this species is believed to be plastoquinone. Couples the redox reaction to proton translocation, and thus conserves the redox energy in a proton gradient. Cyanobacterial NDH-1 also plays a role in inorganic carbon-concentration. This Trichormus variabilis (strain ATCC 29413 / PCC 7937) (Anabaena variabilis) protein is NAD(P)H-quinone oxidoreductase subunit O.